Here is an 82-residue protein sequence, read N- to C-terminus: Small ribosomal subunit protein bS16 (82 aa).

This sequence belongs to the bacterial ribosomal protein bS16 family.

The protein is Small ribosomal subunit protein bS16 of Vibrio vulnificus (strain CMCP6).